A 338-amino-acid polypeptide reads, in one-letter code: Protein RecA (338 aa).

66 to 73 (GPESSGKT) provides a ligand contact to ATP.

This sequence belongs to the RecA family.

It is found in the cytoplasm. In terms of biological role, can catalyze the hydrolysis of ATP in the presence of single-stranded DNA, the ATP-dependent uptake of single-stranded DNA by duplex DNA, and the ATP-dependent hybridization of homologous single-stranded DNAs. It interacts with LexA causing its activation and leading to its autocatalytic cleavage. In Geobacter sulfurreducens (strain ATCC 51573 / DSM 12127 / PCA), this protein is Protein RecA.